Here is a 397-residue protein sequence, read N- to C-terminus: Odorant receptor 85a (397 aa).

The Cytoplasmic portion of the chain corresponds to 1 to 46; the sequence is MIFKYIQEPVLGSLFRSRDSLIYLNRSIDQMGWRLPPRTKPYWWLY. Residues 47–67 form a helical membrane-spanning segment; it reads YIWTLVVIVLVFIFIPYGLIM. At 68-83 the chain is on the extracellular side; it reads TGIKEFKNFTTTDLFT. The N-linked (GlcNAc...) asparagine glycan is linked to N75. A helical membrane pass occupies residues 84–104; sequence YVQVPVNTNASIMKGIIVLFM. Topologically, residues 105 to 142 are cytoplasmic; that stretch reads RRRFSRAQKMMDAMDIRCTKMEEKVQVHRAAALCNRVV. The chain crosses the membrane as a helical span at residues 143–163; that stretch reads VIYHCIYFGYLSMALTGALVI. Over 164-192 the chain is Extracellular; that stretch reads GKTPFCLYNPLVNPDDHFYLATAIESVTM. The helical transmembrane segment at 193-213 threads the bilayer; that stretch reads AGIILANLILDVYPIIYVVVL. The Cytoplasmic portion of the chain corresponds to 214–262; that stretch reads RIHMELLSERIKTLRTDVEKGDDQHYAELVECVKDHKLIVEYGNTLRPM. The helical transmembrane segment at 263 to 283 threads the bilayer; the sequence is ISATMFIQLLSVGLLLGLAAV. Topologically, residues 284–294 are extracellular; that stretch reads SMQFYNTVMER. The helical transmembrane segment at 295 to 315 threads the bilayer; that stretch reads VVSGVYTIAILSQTFPFCYVC. The Cytoplasmic portion of the chain corresponds to 316–347; that stretch reads EQLSSDCESLTNTLFHSKWIGAERRYRTTMLY. A helical membrane pass occupies residues 348–368; it reads FIHNVQQSILFTAGGIFPICL. Over 369–397 the chain is Extracellular; that stretch reads NTNIKMAKFAFSVVTIVNEMDLAEKLRRE.

It belongs to the insect chemoreceptor superfamily. Heteromeric odorant receptor channel (TC 1.A.69) family. Or2a subfamily. In terms of assembly, interacts with Orco. Complexes exist early in the endomembrane system in olfactory sensory neurons (OSNs), coupling these complexes to the conserved ciliary trafficking pathway. In terms of tissue distribution, expressed in olfactory sensory neurons in the antenna.

It is found in the cell membrane. Functionally, odorant receptor which mediates acceptance or avoidance behavior, depending on its substrates. The odorant receptor repertoire encodes a large collection of odor stimuli that vary widely in identity, intensity, and duration. May form a complex with Orco to form odorant-sensing units, providing sensitive and prolonged odorant signaling and calcium permeability. This Drosophila melanogaster (Fruit fly) protein is Odorant receptor 85a (Or85a).